We begin with the raw amino-acid sequence, 159 residues long: ATP synthase subunit b (159 aa).

The chain crosses the membrane as a helical span at residues 2–22; the sequence is NISIPQIIAAILNFIILLLIV.

This sequence belongs to the ATPase B chain family. In terms of assembly, F-type ATPases have 2 components, F(1) - the catalytic core - and F(0) - the membrane proton channel. F(1) has five subunits: alpha(3), beta(3), gamma(1), delta(1), epsilon(1). F(0) has three main subunits: a(1), b(2) and c(10-14). The alpha and beta chains form an alternating ring which encloses part of the gamma chain. F(1) is attached to F(0) by a central stalk formed by the gamma and epsilon chains, while a peripheral stalk is formed by the delta and b chains.

It localises to the cell membrane. Functionally, f(1)F(0) ATP synthase produces ATP from ADP in the presence of a proton or sodium gradient. F-type ATPases consist of two structural domains, F(1) containing the extramembraneous catalytic core and F(0) containing the membrane proton channel, linked together by a central stalk and a peripheral stalk. During catalysis, ATP synthesis in the catalytic domain of F(1) is coupled via a rotary mechanism of the central stalk subunits to proton translocation. In terms of biological role, component of the F(0) channel, it forms part of the peripheral stalk, linking F(1) to F(0). The chain is ATP synthase subunit b from Clostridium botulinum (strain Loch Maree / Type A3).